We begin with the raw amino-acid sequence, 103 residues long: Matrix Gla protein (103 aa).

A signal peptide spans Met-1–Cys-19. Glu-21 is subject to 4-carboxyglutamate. Residues Ser-22, Ser-25, and Ser-28 each carry the phosphoserine modification. One can recognise a Gla domain in the interval Arg-51–Arg-97. Residues Glu-56, Glu-60, Glu-67, and Glu-71 each carry the 4-carboxyglutamate modification. Cysteines 73 and 79 form a disulfide. Positions Arg-97–Lys-103 are cleaved as a propeptide — removed in mature form; probably by carboxypeptidase N.

It belongs to the osteocalcin/matrix Gla protein family. Post-translationally, requires vitamin K-dependent gamma-carboxylation for its function.

It localises to the secreted. Functionally, associates with the organic matrix of bone and cartilage. Thought to act as an inhibitor of bone formation. The protein is Matrix Gla protein (MGP) of Homo sapiens (Human).